Consider the following 156-residue polypeptide: 6,7-dimethyl-8-ribityllumazine synthase (156 aa).

5-amino-6-(D-ribitylamino)uracil-binding positions include Phe28, Ala62 to Glu64, and Ala86 to Ile88. A (2S)-2-hydroxy-3-oxobutyl phosphate-binding site is contributed by Glu91–Thr92. His94 (proton donor) is an active-site residue. Asn119 is a binding site for 5-amino-6-(D-ribitylamino)uracil. Arg133 lines the (2S)-2-hydroxy-3-oxobutyl phosphate pocket.

It belongs to the DMRL synthase family.

It catalyses the reaction (2S)-2-hydroxy-3-oxobutyl phosphate + 5-amino-6-(D-ribitylamino)uracil = 6,7-dimethyl-8-(1-D-ribityl)lumazine + phosphate + 2 H2O + H(+). The protein operates within cofactor biosynthesis; riboflavin biosynthesis; riboflavin from 2-hydroxy-3-oxobutyl phosphate and 5-amino-6-(D-ribitylamino)uracil: step 1/2. Catalyzes the formation of 6,7-dimethyl-8-ribityllumazine by condensation of 5-amino-6-(D-ribitylamino)uracil with 3,4-dihydroxy-2-butanone 4-phosphate. This is the penultimate step in the biosynthesis of riboflavin. The polypeptide is 6,7-dimethyl-8-ribityllumazine synthase (Azoarcus sp. (strain BH72)).